A 37-amino-acid chain; its full sequence is Large ribosomal subunit protein bL36 (37 aa).

The protein belongs to the bacterial ribosomal protein bL36 family.

In Synechococcus sp. (strain CC9605), this protein is Large ribosomal subunit protein bL36.